Reading from the N-terminus, the 147-residue chain is Small ribosomal subunit protein bS16 (147 aa).

The tract at residues 81 to 147 is disordered; the sequence is QKFTGDTSPS…GDNSGEKAEA (67 aa). Basic and acidic residues-rich tracts occupy residues 95–104 and 114–125; these read QPERPNKDDL and EAPREAITKKSE. A compositionally biased stretch (low complexity) spans 126–140; that stretch reads GAAADEASESAAGDN.

It belongs to the bacterial ribosomal protein bS16 family.

This is Small ribosomal subunit protein bS16 from Cutibacterium acnes (strain DSM 16379 / KPA171202) (Propionibacterium acnes).